The following is a 441-amino-acid chain: MRVVTIVILLCFCKAAELRKASPGSVRSRVNHGRAGGGRRGSNPVKRYAPGLPCDVYTYLHEKYLDCQERKLVYVLPGWPQDLLHMLLARNKIRTLKNNMFSKFKKLKSLDLQQNEISKIESEAFFGLNKLTTLLLQHNQIKVLTEEVFIYTPLLSYLRLYDNPWHCTCEIETLISMLQIPRNRNLGNYAKCESPQEQKNKKLRQIKSEQLCNEEEKEQLDPKPQVSGRPPVIKPEVDSTFCHNYVFPIQTLDCKRKELKKVPNNIPPDIVKLDLSYNKINQLRPKEFEDVHELKKLNLSSNGIEFIDPAAFLGLTHLEELDLSNNSLQNFDYGVLEDLYFLKLLWLRDNPWRCDYNIHYLYYWLKHHYNVHFNGLECKTPEEYKGWSVGKYIRSYYEECPKDKLPAYPESFDQDTEDDEWEKKHRDHTAKKQSVIITIVG.

An N-terminal signal peptide occupies residues 1–18 (MRVVTIVILLCFCKAAEL). 3 LRR repeats span residues 82-103 (DLLH…MFSK), 106-127 (KLKS…AFFG), and 130-151 (KLTT…VFIY). The LRRCT 1 domain occupies 163-214 (NPWHCTCEIETLISMLQIPRNRNLGNYAKCESPQEQKNKKLRQIKSEQLCNE). The LRRNT domain occupies 225–268 (QVSGRPPVIKPEVDSTFCHNYVFPIQTLDCKRKELKKVPNNIPP). LRR repeat units lie at residues 269–290 (DIVK…EFED), 293–314 (ELKK…AFLG), and 317–340 (HLEE…EDLY). In terms of domain architecture, LRRCT 2 spans 350 to 402 (NPWRCDYNIHYLYYWLKHHYNVHFNGLECKTPEEYKGWSVGKYIRSYYEECPK).

In terms of tissue distribution, expressed in osteoblast cell lines. Well expressed in ovary, heart, pancreas, skeletal muscle, lung, and fetal kidney and lung and only at the basal levels in the other tissues examined including adult kidney. More expressed in S-type neuroblastoma cells than in N-type neuroblastoma cells.

The protein resides in the secreted. The protein localises to the extracellular space. Functionally, involved in bone homeostasis. Acts as a negative regulator of RANKL-induced osteoclast precursor differentiation from bone marrow precursors. The chain is Leucine-rich repeat-containing protein 17 (LRRC17) from Homo sapiens (Human).